Consider the following 221-residue polypeptide: Orotidine 5'-phosphate decarboxylase (221 aa).

Residues Asp-12, Lys-34, 60 to 69 (DFKVADIPNT), Ser-117, 170 to 180 (PGVGAQGGKAS), Gly-193, and Arg-194 contribute to the substrate site. Lys-62 serves as the catalytic Proton donor.

This sequence belongs to the OMP decarboxylase family. Type 1 subfamily. In terms of assembly, homodimer.

It carries out the reaction orotidine 5'-phosphate + H(+) = UMP + CO2. It participates in pyrimidine metabolism; UMP biosynthesis via de novo pathway; UMP from orotate: step 2/2. Catalyzes the decarboxylation of orotidine 5'-monophosphate (OMP) to uridine 5'-monophosphate (UMP). The sequence is that of Orotidine 5'-phosphate decarboxylase from Methanosarcina barkeri (strain Fusaro / DSM 804).